A 249-amino-acid polypeptide reads, in one-letter code: Transmembrane protein 106C (249 aa).

Residues 1–26 (MGSRHSTYAHRPFSKRRKADDTEDSL) are disordered. G2 carries the N-myristoyl glycine lipid modification. 2 consecutive transmembrane segments (helical) span residues 86-106 (YVLLSILLCLLASGLVVFFLF) and 197-217 (SYVYFFCTLPYIGVHNVVVFV).

Belongs to the TMEM106 family. In terms of assembly, interacts with TMEM106B.

The protein localises to the endoplasmic reticulum membrane. It is found in the membrane. The sequence is that of Transmembrane protein 106C (TMEM106C) from Bos taurus (Bovine).